The following is a 618-amino-acid chain: Probable peptide transporter ptr2 (618 aa).

Serine 22 carries the post-translational modification Phosphoserine. Tyrosine 23 carries the phosphotyrosine modification. Phosphoserine is present on residues serine 25 and serine 33. Residues 26–50 are disordered; sequence KEKKADGSATINTADEQSSTDELQK. Polar residues predominate over residues 34–50; the sequence is ATINTADEQSSTDELQK. Threonine 35 carries the post-translational modification Phosphothreonine. Serine 44 is modified (phosphoserine). Threonine 45 is subject to Phosphothreonine. A phosphoserine mark is found at serine 51 and serine 53. The residue at position 54 (threonine 54) is a Phosphothreonine. A run of 10 helical transmembrane segments spans residues 131-151, 161-181, 187-207, 247-267, 273-293, 400-420, 430-450, 475-495, 510-530, and 541-561; these read GLSNFFTFWCYVTPVGAALIA, IVCSAVIYFIGILILTCTAIP, GKSMGGFVVSLIIIGLGTGGI, YMIFYWSINVGSLSVLATTSL, FVYAYLLPLCVFVIPLIILAV, FDSIALIIFIPICDNIIYPLL, ILRITLGFMFATASMIYAAVL, VWIQIPAYVLIAFSEIFASIT, SIITALFLFTNAFGAILSICI, and WMYTGIAVTAFIAGIMFWVCF. Serine 594 is subject to Phosphoserine. Threonine 618 carries the post-translational modification Phosphothreonine.

Belongs to the major facilitator superfamily. Proton-dependent oligopeptide transporter (POT/PTR) (TC 2.A.17) family.

It is found in the membrane. Uptake of small peptides. The protein is Probable peptide transporter ptr2 (ptr2) of Schizosaccharomyces pombe (strain 972 / ATCC 24843) (Fission yeast).